The primary structure comprises 302 residues: MFQSSRLVALGLCAALVLVGGSIILSGLSPNLSSPMAAAARASSSALVALPGGRMIEVPHMTKDYRDVKVCSRQRKWEIREHMRDPIKMGLMGTKAGMTTYYDDEGIAHPVTVIALEAGNVVTQVKTKETDGYDAVQLAYKETRDRTIPWPERQHLRKHGNVKAMKHLKEFKIADVSEFTPGQQLKAEELFEVGDLVDVSGTSSGKGFQGSIRRWGMKRGPMSHGSKSHRQHGSIGCSATPSRVYKGLKMAGRMGNERKTVKKLPVMMVNDEEKYIVVRGSVPGKKGTIVELRPTKIVGKHC.

The transit peptide at 1 to 36 (MFQSSRLVALGLCAALVLVGGSIILSGLSPNLSSPM) directs the protein to the chloroplast. The disordered stretch occupies residues 208–239 (FQGSIRRWGMKRGPMSHGSKSHRQHGSIGCSA).

This sequence belongs to the universal ribosomal protein uL3 family. In terms of assembly, part of the 50S ribosomal subunit.

The protein resides in the plastid. It is found in the chloroplast. One of the primary rRNA binding proteins, it binds directly near the 3'-end of the 23S rRNA, where it nucleates assembly of the 50S subunit. The sequence is that of Large ribosomal subunit protein uL3c (RPL3) from Bigelowiella natans (Pedinomonas minutissima).